The primary structure comprises 215 residues: AN1-type zinc finger protein C1271.05c (215 aa).

Residues 116–128 (IPSISKSNLTNPP) show a composition bias toward polar residues. Residues 116–138 (IPSISKSNLTNPPLESEKSSDKA) are disordered. An AN1-type zinc finger spans residues 144 to 193 (ATSRRRCCHPTCTRITLRLAGNCLHCNGRFCAAHRLMEDHDCVALFSLRK). 8 residues coordinate Zn(2+): cysteine 150, cysteine 155, cysteine 166, cysteine 169, cysteine 174, histidine 177, histidine 183, and cysteine 185.

It localises to the cytoplasm. It is found in the nucleus. The polypeptide is AN1-type zinc finger protein C1271.05c (Schizosaccharomyces pombe (strain 972 / ATCC 24843) (Fission yeast)).